The sequence spans 793 residues: Tripartite terminase subunit 1 (793 aa).

The C3H1-type zinc finger occupies 206 to 234 (CSVCFEELCVTANSGDSTHKRIVRKICDH). An ATP-binding site is contributed by 697 to 704 (FSSVFKCG).

The protein belongs to the herpesviridae TRM1 protein family. Associates with TRM2 and TRM3 to form the tripartite terminase complex. Interacts with portal protein.

It is found in the host nucleus. Component of the molecular motor that translocates viral genomic DNA in empty capsid during DNA packaging. Forms a tripartite terminase complex together with TRM2 and TRM3 in the host cytoplasm. Once the complex reaches the host nucleus, it interacts with the capsid portal vertex. This portal forms a ring in which genomic DNA is translocated into the capsid. TRM1 carries an endonuclease activity that plays an important role for the cleavage of concatemeric viral DNA into unit length genomes. This Gallid herpesvirus 2 (strain Chicken/Md5/ATCC VR-987) (GaHV-2) protein is Tripartite terminase subunit 1.